The sequence spans 284 residues: Ribosomal RNA small subunit methyltransferase A (284 aa).

Asn-28, Leu-30, Gly-55, Glu-77, Asp-103, and Asn-123 together coordinate S-adenosyl-L-methionine.

The protein belongs to the class I-like SAM-binding methyltransferase superfamily. rRNA adenine N(6)-methyltransferase family. RsmA subfamily.

The protein localises to the cytoplasm. The catalysed reaction is adenosine(1518)/adenosine(1519) in 16S rRNA + 4 S-adenosyl-L-methionine = N(6)-dimethyladenosine(1518)/N(6)-dimethyladenosine(1519) in 16S rRNA + 4 S-adenosyl-L-homocysteine + 4 H(+). Functionally, specifically dimethylates two adjacent adenosines (A1518 and A1519) in the loop of a conserved hairpin near the 3'-end of 16S rRNA in the 30S particle. May play a critical role in biogenesis of 30S subunits. In Bradyrhizobium diazoefficiens (strain JCM 10833 / BCRC 13528 / IAM 13628 / NBRC 14792 / USDA 110), this protein is Ribosomal RNA small subunit methyltransferase A.